Here is a 553-residue protein sequence, read N- to C-terminus: MSEPLPPKEGEPRPQKEESQNDTLEATESKSQHITGLKLGLVVASVTFVAFLMLLDMSIIVTAIPHITSEFHSLNDVGWYGSAYLLANCALQPLAGKLYTLLGLKYTFFAFLCIFELGSVLCGAARSSTMLIVGRAVAGMGGSGLVNGALTILSTAAPKHKQPVLIGVMMGLSQIAIVCGPLLGGAFTQHATWRWCFYINLPIGAVAAFLLLVITIPDRISSTDSELSTDKPMANIKSTLRKLDLVGFVVFAAFATMISLALEWGGSTYTWRSSVIIGLFCGGGFALIAFVLWERHVGDAVAMIPGSVAGKRQVWCSCLFMGFFSGSLLVFSYYLPIYFQAVKDVSPTLSGVYMLPGILGQVIMAMVSGFAIGKTGYYLPWALGSAVLVAIGAGLVSTFQPHTSTVKWVMYQFIAGFGRGCGMQTPIIAIQSTLSPEQGALGISLAVFGQTFGGSLFLDFANLVFGSGLRTGLSKYAPTVDTQAVTAAGATGFRDVVSKNNLPGVVKAYSLAVDHTFYLAVGATACTFVFAFGMGWRKIATKNDTRAVPETDA.

The span at 1-19 (MSEPLPPKEGEPRPQKEES) shows a compositional bias: basic and acidic residues. The interval 1–29 (MSEPLPPKEGEPRPQKEESQNDTLEATES) is disordered. N-linked (GlcNAc...) asparagine glycosylation is present at N21. 13 consecutive transmembrane segments (helical) span residues 41 to 61 (LVVA…SIIV), 77 to 96 (VGWY…PLAG), 101 to 121 (LLGL…GSVL), 136 to 156 (AVAG…LSTA), 164 to 184 (VLIG…PLLG), 196 to 216 (CFYI…VITI), 245 to 265 (LVGF…LEWG), 273 to 293 (SSVI…FVLW), 319 to 339 (LFMG…PIYF), 352 to 372 (VYML…GFAI), 376 to 396 (GYYL…AGLV), 440 to 460 (ALGI…FLDF), and 516 to 536 (TFYL…GMGW). N-linked (GlcNAc...) asparagine glycosylation occurs at N543.

This sequence belongs to the major facilitator superfamily. TCR/Tet family.

The protein localises to the membrane. Efflux pump; part of the gene cluster that mediates the biosynthesis of compactin, also known as mevastatin or ML-236B, and which acts as a potent competitive inhibitor of HMG-CoA reductase. The sequence is that of Efflux pump mlcE from Penicillium citrinum.